The primary structure comprises 363 residues: 3-isopropylmalate dehydrogenase (363 aa).

78-91 (GPKWEHLPPAEQPE) provides a ligand contact to NAD(+). Arginine 99, arginine 109, arginine 138, and aspartate 227 together coordinate substrate. Mg(2+)-binding residues include aspartate 227, aspartate 251, and aspartate 255. 285–297 (GSAPDIAGKDIAN) is an NAD(+) binding site.

This sequence belongs to the isocitrate and isopropylmalate dehydrogenases family. LeuB type 1 subfamily. Homodimer. It depends on Mg(2+) as a cofactor. Mn(2+) serves as cofactor.

It localises to the cytoplasm. The enzyme catalyses (2R,3S)-3-isopropylmalate + NAD(+) = 4-methyl-2-oxopentanoate + CO2 + NADH. It functions in the pathway amino-acid biosynthesis; L-leucine biosynthesis; L-leucine from 3-methyl-2-oxobutanoate: step 3/4. Its function is as follows. Catalyzes the oxidation of 3-carboxy-2-hydroxy-4-methylpentanoate (3-isopropylmalate) to 3-carboxy-4-methyl-2-oxopentanoate. The product decarboxylates to 4-methyl-2 oxopentanoate. The chain is 3-isopropylmalate dehydrogenase from Pectobacterium atrosepticum (strain SCRI 1043 / ATCC BAA-672) (Erwinia carotovora subsp. atroseptica).